The following is a 779-amino-acid chain: Abnormal cell migration protein 10 (779 aa).

Residues 78–97 are compositionally biased toward acidic residues; sequence NELEADTEEDIAETADDEES. 3 disordered regions span residues 78 to 105, 189 to 217, and 242 to 302; these read NELE…EKTE, SSSR…PQQP, and AASS…NAEE. Residues 189–200 are compositionally biased toward polar residues; sequence SSSRENVKSIST. The segment covering 242–254 has biased composition (low complexity); the sequence is AASSCSSPDGDSA. Polar residues predominate over residues 256–293; sequence GDSSSTESSNNRCRNSAFSSNDSCRDSLNTPSPTQVSP. Residues 317-407 form the Ras-associating domain; sequence EAKVTKIFVK…NKLYFMRRPD (91 aa). Positions 456–566 constitute a PH domain; it reads PPEMEGFLYL…WLVALRIAKN (111 aa). Polar residues-rich tracts occupy residues 645-660 and 688-698; these read SFSV…SRTS and RASTSSPTIPQ. A disordered region spans residues 645–763; the sequence is SFSVNSCQQS…SPMAPAKNDL (119 aa). Positions 708–729 are enriched in pro residues; the sequence is PAPPPVASVMRMPPPVTPPKPC.

Belongs to the MRL family. As to quaternary structure, may interact (via Ras-associating and PH domains) with ced-10 (GTP-bound form).

It is found in the perikaryon. Its function is as follows. Required cell non-autonomously for proper development of the excretory canals and for the long-range anterior-posterior migrations of embryonic neurons CAN, ALM and HSN. Plays a role, probably downstream of ced-10/rac1, in orientating axonal growth of HSN and AVM neurons in response to guidance cues such as slt-1. May regulate growth cone polarization by promoting asymmetric F-actin assembly. May be involved in signal transduction during cell migration. The chain is Abnormal cell migration protein 10 from Caenorhabditis elegans.